Here is a 182-residue protein sequence, read N- to C-terminus: Large ribosomal subunit protein uL5 (182 aa).

The protein belongs to the universal ribosomal protein uL5 family. As to quaternary structure, part of the 50S ribosomal subunit; part of the 5S rRNA/L5/L18/L25 subcomplex. Contacts the 5S rRNA and the P site tRNA. Forms a bridge to the 30S subunit in the 70S ribosome.

In terms of biological role, this is one of the proteins that bind and probably mediate the attachment of the 5S RNA into the large ribosomal subunit, where it forms part of the central protuberance. In the 70S ribosome it contacts protein S13 of the 30S subunit (bridge B1b), connecting the 2 subunits; this bridge is implicated in subunit movement. Contacts the P site tRNA; the 5S rRNA and some of its associated proteins might help stabilize positioning of ribosome-bound tRNAs. This chain is Large ribosomal subunit protein uL5, found in Leptospira interrogans serogroup Icterohaemorrhagiae serovar copenhageni (strain Fiocruz L1-130).